We begin with the raw amino-acid sequence, 276 residues long: Pantothenate synthetase (276 aa).

Position 26 to 33 (26 to 33) interacts with ATP; the sequence is MGFLHEGH. H33 acts as the Proton donor in catalysis. Residue Q57 participates in (R)-pantoate binding. Residue Q57 coordinates beta-alanine. ATP is bound at residue 142–145; it reads GLKD. Q148 contacts (R)-pantoate. ATP is bound by residues I171 and 179-182; that span reads KSSR.

Belongs to the pantothenate synthetase family. Homodimer.

Its subcellular location is the cytoplasm. The catalysed reaction is (R)-pantoate + beta-alanine + ATP = (R)-pantothenate + AMP + diphosphate + H(+). Its pathway is cofactor biosynthesis; (R)-pantothenate biosynthesis; (R)-pantothenate from (R)-pantoate and beta-alanine: step 1/1. In terms of biological role, catalyzes the condensation of pantoate with beta-alanine in an ATP-dependent reaction via a pantoyl-adenylate intermediate. This is Pantothenate synthetase from Exiguobacterium sibiricum (strain DSM 17290 / CCUG 55495 / CIP 109462 / JCM 13490 / 255-15).